A 419-amino-acid polypeptide reads, in one-letter code: Peroxisome biogenesis factor 10 (419 aa).

At 1–27 the chain is on the peroxisomal matrix side; the sequence is MPPSEEIKLRAVSPRPDFKANYLEFAN. Residues 28–57 traverse the membrane as a helical segment; it reads APAIVRANQKDSYFETVLRDKLQNVIQIFK. Residue glycine 58 is a topological domain, cytoplasmic. The helical transmembrane segment at 59–80 threads the bilayer; sequence QRFTHTHPEEIGVAAKALYLSL. Topologically, residues 81–108 are peroxisomal matrix; the sequence is TTLLGTKTLGEEYVDLIYVSRDGKRIPR. A helical transmembrane segment spans residues 109–141; that stretch reads YLARAGFIFAYAILPYFLTRLFRRLKSSSTPKD. At 142–158 the chain is on the cytoplasmic side; it reads EVTEEKINKELPISLRI. A helical membrane pass occupies residues 159–185; that stretch reads EKYLSNMSYSKVLDTIMNLHIAVFYFS. At 186-215 the chain is on the peroxisomal matrix side; that stretch reads GQFYNISKRFFSMRYAFGHKINKERTPNGN. Residues 216–235 traverse the membrane as a helical segment; that stretch reads YELLGGLIVLQLVMKSLGGF. Residues 236–419 lie on the Cytoplasmic side of the membrane; that stretch reads KGLIGSFTGN…RTLGYFLVVF (184 aa). 8 residues coordinate Zn(2+): cysteine 298, cysteine 301, cysteine 313, histidine 315, cysteine 318, cysteine 321, cysteine 334, and cysteine 347. The segment at 298 to 360 adopts an RING-type zinc-finger fold; that stretch reads CMLCLSYMTN…FYIPTLNKIC (63 aa).

The protein belongs to the pex2/pex10/pex12 family. As to quaternary structure, component of the peroxisomal translocation complex, composed of at least PEX3, PEX2, PEX10 and PEX12. Interacts with PEX19.

It localises to the peroxisome membrane. The catalysed reaction is S-ubiquitinyl-[E2 ubiquitin-conjugating enzyme]-L-cysteine + [acceptor protein]-L-lysine = [E2 ubiquitin-conjugating enzyme]-L-cysteine + N(6)-ubiquitinyl-[acceptor protein]-L-lysine.. It participates in protein modification; protein ubiquitination. With respect to regulation, the E3 ubiquitin-protein ligase activity is stimulated by PEX12. Its function is as follows. E3 ubiquitin-protein ligase component of the peroxisomal translocation complex. The two types of peroxisomal matrix targeting signals, PTS1 and PTS2, are first recognized in the cytosol by their receptors PEX5 and PEX7, respectively, which then carry the cargo to the peroxisomal membrane. The peroxisomal targeting signal (PTS) receptor-cargo complexes interact with peroxisomal membrane protein (PMP) components of the docking complex. They have then additional downstream interactions with the translocation complex, leading to the transport of fully folded and oligomerized cargo into the peroxisome matrix. The peroxisomal translocation complex forms the retrotranslocation channel with each subunit contributing transmembrane segments that coassemble into an open channel that specifically allows the passage of PEX5 and PEX20 through the peroxisomal membrane. Specifically catalyzes monoubiquitination of PEX5 and/or PEX20 at 'Cys-6' and 'Cys-8', respectively, a modification that acts as a signal for PEX5 or PEX20 export from peroxisomes to the cytosol, thereby promoting PEX5 and PEX20 recycling. The chain is Peroxisome biogenesis factor 10 from Komagataella pastoris (Yeast).